A 424-amino-acid chain; its full sequence is Elongation factor 1-alpha (424 aa).

In terms of domain architecture, tr-type G spans 5–223; the sequence is KPHLNLITIG…DAFKVPEKPI (219 aa). A G1 region spans residues 14-21; it reads GHVDHGKS. 14 to 21 provides a ligand contact to GTP; the sequence is GHVDHGKS. Ser-21 lines the Mg(2+) pocket. A G2 region spans residues 70–74; sequence GVTID. The tract at residues 91 to 94 is G3; it reads DAPG. Residues 91-95 and 148-151 contribute to the GTP site; these read DAPGH and NKMD. Residues 148–151 are G4; that stretch reads NKMD. The interval 187–189 is G5; that stretch reads SGY.

The protein belongs to the TRAFAC class translation factor GTPase superfamily. Classic translation factor GTPase family. EF-Tu/EF-1A subfamily.

The protein resides in the cytoplasm. It catalyses the reaction GTP + H2O = GDP + phosphate + H(+). In terms of biological role, GTP hydrolase that promotes the GTP-dependent binding of aminoacyl-tRNA to the A-site of ribosomes during protein biosynthesis. This is Elongation factor 1-alpha from Thermoplasma volcanium (strain ATCC 51530 / DSM 4299 / JCM 9571 / NBRC 15438 / GSS1).